The sequence spans 789 residues: UPF0313 protein VC_1711 (789 aa).

In terms of domain architecture, Radical SAM core spans 363-642; that stretch reads AYDMIKTSVN…KALLRYHDPA (280 aa). 3 residues coordinate [4Fe-4S] cluster: cysteine 377, cysteine 381, and cysteine 384. The tract at residues 669–789 is disordered; it reads PEKDSDLVTP…NTQRQPQRAR (121 aa). A compositionally biased stretch (basic residues) spans 683–698; it reads KSGRHGANRFATKHTH. Composition is skewed to polar residues over residues 716-726, 733-763, and 778-789; these read RPNSGNKSNQG, PTGS…QRGS, and RGNTQRQPQRAR.

Belongs to the UPF0313 family. Requires [4Fe-4S] cluster as cofactor.

This chain is UPF0313 protein VC_1711, found in Vibrio cholerae serotype O1 (strain ATCC 39315 / El Tor Inaba N16961).